The following is an 86-amino-acid chain: ADIENGERIFTANCAACHAGGNNVIMPEKTLKKDALEANGMNAVSAITYQVTNGKNAMPAFGGRLSDSDIEDVANYVLSQSEQGWD.

Heme c-binding residues include cysteine 14, cysteine 17, histidine 18, and methionine 58.

The protein belongs to the cytochrome c family. PetJ subfamily. Monomer. In terms of processing, binds 1 heme c group covalently per subunit.

It is found in the plastid. Its subcellular location is the chloroplast thylakoid lumen. Functionally, functions as an electron carrier between membrane-bound cytochrome b6-f and photosystem I in oxygenic photosynthesis. The sequence is that of Cytochrome c6 (petJ) from Bumilleriopsis filiformis (Yellow-green alga).